A 383-amino-acid polypeptide reads, in one-letter code: Homoserine O-succinyltransferase (383 aa).

In terms of domain architecture, AB hydrolase-1 spans 51–361 (NALLICHALS…ESDFGHDAFL (311 aa)). The active-site Nucleophile is S157. R227 serves as a coordination point for substrate. Active-site residues include D324 and H357. D358 is a substrate binding site.

Belongs to the AB hydrolase superfamily. MetX family. As to quaternary structure, homodimer.

Its subcellular location is the cytoplasm. The catalysed reaction is L-homoserine + succinyl-CoA = O-succinyl-L-homoserine + CoA. Its pathway is amino-acid biosynthesis; L-methionine biosynthesis via de novo pathway; O-succinyl-L-homoserine from L-homoserine: step 1/1. Its function is as follows. Transfers a succinyl group from succinyl-CoA to L-homoserine, forming succinyl-L-homoserine. This is Homoserine O-succinyltransferase from Teredinibacter turnerae (strain ATCC 39867 / T7901).